The primary structure comprises 181 residues: Translation initiation factor IF-3 (181 aa).

This sequence belongs to the IF-3 family. As to quaternary structure, monomer.

It is found in the cytoplasm. IF-3 binds to the 30S ribosomal subunit and shifts the equilibrium between 70S ribosomes and their 50S and 30S subunits in favor of the free subunits, thus enhancing the availability of 30S subunits on which protein synthesis initiation begins. The sequence is that of Translation initiation factor IF-3 from Cereibacter sphaeroides (strain ATCC 17023 / DSM 158 / JCM 6121 / CCUG 31486 / LMG 2827 / NBRC 12203 / NCIMB 8253 / ATH 2.4.1.) (Rhodobacter sphaeroides).